The primary structure comprises 1072 residues: Carbamoyl phosphate synthase large chain (1072 aa).

The segment at 1 to 401 (MPKYKDINKV…SLLKAVRSLE (401 aa)) is carboxyphosphate synthetic domain. Residues R129, R169, G175, G176, K208, L210, E215, G241, V242, H243, Q284, and E298 each contribute to the ATP site. Residues 133–327 (KRKMQEIGEP…IAKIAAKIAI (195 aa)) form the ATP-grasp 1 domain. Q284, E298, and N300 together coordinate Mg(2+). Residues Q284, E298, and N300 each contribute to the Mn(2+) site. The oligomerization domain stretch occupies residues 402-544 (IKAYGLRLNN…YIYSTYGEED (143 aa)). Positions 545 to 929 (EVEIHDMPKV…ALYKALEGAG (385 aa)) are carbamoyl phosphate synthetic domain. Positions 671–861 (SKLLRELNIN…MVKLAVEVAL (191 aa)) constitute an ATP-grasp 2 domain. ATP is bound by residues R707, K746, I748, E752, G777, V778, H779, S780, Q820, and E832. Q820, E832, and N834 together coordinate Mg(2+). Mn(2+) contacts are provided by Q820, E832, and N834. The region spanning 930–1072 (LKIPKKGKIL…QKDNVKNLVL (143 aa)) is the MGS-like domain. Positions 930-1072 (LKIPKKGKIL…QKDNVKNLVL (143 aa)) are allosteric domain.

This sequence belongs to the CarB family. As to quaternary structure, composed of two chains; the small (or glutamine) chain promotes the hydrolysis of glutamine to ammonia, which is used by the large (or ammonia) chain to synthesize carbamoyl phosphate. Tetramer of heterodimers (alpha,beta)4. Mg(2+) is required as a cofactor. It depends on Mn(2+) as a cofactor.

It carries out the reaction hydrogencarbonate + L-glutamine + 2 ATP + H2O = carbamoyl phosphate + L-glutamate + 2 ADP + phosphate + 2 H(+). It catalyses the reaction hydrogencarbonate + NH4(+) + 2 ATP = carbamoyl phosphate + 2 ADP + phosphate + 2 H(+). Its pathway is amino-acid biosynthesis; L-arginine biosynthesis; carbamoyl phosphate from bicarbonate: step 1/1. It functions in the pathway pyrimidine metabolism; UMP biosynthesis via de novo pathway; (S)-dihydroorotate from bicarbonate: step 1/3. Its function is as follows. Large subunit of the glutamine-dependent carbamoyl phosphate synthetase (CPSase). CPSase catalyzes the formation of carbamoyl phosphate from the ammonia moiety of glutamine, carbonate, and phosphate donated by ATP, constituting the first step of 2 biosynthetic pathways, one leading to arginine and/or urea and the other to pyrimidine nucleotides. The large subunit (synthetase) binds the substrates ammonia (free or transferred from glutamine from the small subunit), hydrogencarbonate and ATP and carries out an ATP-coupled ligase reaction, activating hydrogencarbonate by forming carboxy phosphate which reacts with ammonia to form carbamoyl phosphate. The sequence is that of Carbamoyl phosphate synthase large chain from Thermoanaerobacter pseudethanolicus (strain ATCC 33223 / 39E) (Clostridium thermohydrosulfuricum).